Reading from the N-terminus, the 156-residue chain is MPRRRVVGQRKILPDPKFNSELLAKFINVIMQDGKKSTAEKIIYKALDTVAEKKSEDHLVILEAALENVRPSVEVKSRRVGGSTYQVPCEVRPVRRNALGMRWLVEAARKRGEKSMALRLAGELLDASENKGTAVKKREDVHRMAEANKAFAHYRW.

Belongs to the universal ribosomal protein uS7 family. As to quaternary structure, part of the 30S ribosomal subunit. Contacts proteins S9 and S11.

In terms of biological role, one of the primary rRNA binding proteins, it binds directly to 16S rRNA where it nucleates assembly of the head domain of the 30S subunit. Is located at the subunit interface close to the decoding center, probably blocks exit of the E-site tRNA. This chain is Small ribosomal subunit protein uS7, found in Shewanella woodyi (strain ATCC 51908 / MS32).